A 256-amino-acid chain; its full sequence is Isoprenyl transferase (256 aa).

Aspartate 33 is an active-site residue. Residue aspartate 33 coordinates Mg(2+). Substrate is bound by residues 34-37, tryptophan 38, arginine 46, histidine 50, and 78-80; these read GNGR and STE. The active-site Proton acceptor is asparagine 81. Residues tryptophan 82, arginine 84, arginine 201, and 207–209 each bind substrate; that span reads RIS. Glutamate 220 is a binding site for Mg(2+).

This sequence belongs to the UPP synthase family. Homodimer. It depends on Mg(2+) as a cofactor.

Functionally, catalyzes the condensation of isopentenyl diphosphate (IPP) with allylic pyrophosphates generating different type of terpenoids. The chain is Isoprenyl transferase from Staphylococcus aureus (strain COL).